The chain runs to 805 residues: Acetyl-CoA decarbonylase/synthase complex subunit alpha 2 (805 aa).

6 residues coordinate [4Fe-4S] cluster: Cys72, Cys75, Cys76, Cys78, Cys83, and Cys93. Residue His116 coordinates CO. Positions 249, 277, and 322 each coordinate [Ni-4Fe-4S] cluster. 4Fe-4S ferredoxin-type domains follow at residues 407-435 and 445-474; these read EEFKVYIDKCVKCGECMLACPEELDIPEA and EYLEALHDVCIGCRRCEQVCKKEIPILNVL. Residues Cys416, Cys419, Cys422, Cys426, Cys454, Cys457, Cys460, and Cys464 each coordinate [4Fe-4S] cluster. Residues Cys522, Cys551, and Cys586 each coordinate [Ni-4Fe-4S] cluster.

It belongs to the Ni-containing carbon monoxide dehydrogenase family. In terms of assembly, heterotetramer of two alpha and two epsilon subunits. The ACDS complex is made up of alpha, epsilon, beta, gamma and delta subunits with a probable stoichiometry of (alpha(2)epsilon(2))(4)-beta(8)-(gamma(1)delta(1))(8). [4Fe-4S] cluster serves as cofactor. It depends on [Ni-4Fe-4S] cluster as a cofactor.

The catalysed reaction is CO + 2 oxidized [2Fe-2S]-[ferredoxin] + H2O = 2 reduced [2Fe-2S]-[ferredoxin] + CO2 + 2 H(+). It participates in one-carbon metabolism; methanogenesis from acetate. Functionally, part of the ACDS complex that catalyzes the reversible cleavage of acetyl-CoA, allowing growth on acetate as sole source of carbon and energy. The alpha-epsilon subcomponent functions as a carbon monoxide dehydrogenase. The polypeptide is Acetyl-CoA decarbonylase/synthase complex subunit alpha 2 (Methanosarcina acetivorans (strain ATCC 35395 / DSM 2834 / JCM 12185 / C2A)).